A 650-amino-acid chain; its full sequence is 1-deoxy-D-xylulose-5-phosphate synthase (650 aa).

Thiamine diphosphate contacts are provided by residues histidine 87 and 128-130 (GHS). Mg(2+) is bound at residue aspartate 159. Thiamine diphosphate contacts are provided by residues 160 to 161 (GS), asparagine 188, tyrosine 299, and glutamate 383. Asparagine 188 serves as a coordination point for Mg(2+).

This sequence belongs to the transketolase family. DXPS subfamily. As to quaternary structure, homodimer. Requires Mg(2+) as cofactor. Thiamine diphosphate is required as a cofactor.

It carries out the reaction D-glyceraldehyde 3-phosphate + pyruvate + H(+) = 1-deoxy-D-xylulose 5-phosphate + CO2. The protein operates within metabolic intermediate biosynthesis; 1-deoxy-D-xylulose 5-phosphate biosynthesis; 1-deoxy-D-xylulose 5-phosphate from D-glyceraldehyde 3-phosphate and pyruvate: step 1/1. Its function is as follows. Catalyzes the acyloin condensation reaction between C atoms 2 and 3 of pyruvate and glyceraldehyde 3-phosphate to yield 1-deoxy-D-xylulose-5-phosphate (DXP). In Syntrophus aciditrophicus (strain SB), this protein is 1-deoxy-D-xylulose-5-phosphate synthase.